Here is a 164-residue protein sequence, read N- to C-terminus: 3-hydroxyacyl-[acyl-carrier-protein] dehydratase FabZ (164 aa).

His70 is an active-site residue.

This sequence belongs to the thioester dehydratase family. FabZ subfamily.

Its subcellular location is the cytoplasm. The catalysed reaction is a (3R)-hydroxyacyl-[ACP] = a (2E)-enoyl-[ACP] + H2O. Functionally, involved in unsaturated fatty acids biosynthesis. Catalyzes the dehydration of short chain beta-hydroxyacyl-ACPs and long chain saturated and unsaturated beta-hydroxyacyl-ACPs. This chain is 3-hydroxyacyl-[acyl-carrier-protein] dehydratase FabZ, found in Synechocystis sp. (strain ATCC 27184 / PCC 6803 / Kazusa).